The chain runs to 1303 residues: MENFVLYEEIGRGSRTVVYKGRRKGTINFVAILCTEKCKRPEITNWVRLTHEIKHKNIVTFHEWYETSNHLWLVVELCTGGSLETVIAQDENLPEDVVREFGVDLVTGLHHLHRLGILFCDLSPGKILLEGPGTLKFSNFCLAKVAGESLEEFFALVAAEEGGGDSGENALKKSMKTRVRGSLIYAAPEIVKGTEFSVTSDLWSLGCLLYEMFSGKPPFFSETVSELVEKILYEDPLPPIPKDSSFPKASSDFLNLLDGLLQKDPQKRFSWEGVLQHPFWKDALRGEDSGWASEDSPFSRNVMECSGPHDSRELLQSPKNGQAKGQKAAHRLSQSFRLENPTELRPKSIMGGQLNESIFLLSSRPTPRTSAMVELNPGEGEDPSSPQKTSPLSKMTSGHLSQGALESQMRELIYTDSDLVITPIIDNPKIMKQPAIKFDPKILHLPAYSVEKLLVLKDQDWNDFLQQVCSQIDSSEKSTGALRAKLNLLCYLCVVATHKEVATRLLHSPLFQLLIQHLRIAPNWDIRSKVARVVGMLALHTTELQENVPVIEAITLLTELIRENFRSGKLKQCLLPTLGQLLYLVATQEEKNQHSRDCWAVPLAAYTVLMRCLREGEERVVNHMAAKIIENVCTTFSAQAQGFTTGEIGPVLWHLFRHSTVDALRITAISALCRITRQSPTAFQNVIEKVGLNAVISSLASAICKVQQYMLTLFTAMLSCGIHLQRLIQEKDFVSTVIRLLDSPSTPIRAKAFLVLLYILIHNRDMLLLSCQARLVMYIERDSRKTSPGKEQQSGNEYLARCLDLLIQHMVQEPPRILGDILNALANVSGRKHPSTVQGKQLKMCLPMMPVVLHLVMSQVFRPQVVTEEFLFSYGTILSHIKSIDLGETNIDGAIGIVASEEFIKVTLSAFEAVIQYPVLLADYRSTVMDYILPPLVSLVQSQNVEWRLFSLRLLSETTTLLVSQEPEDGDEEASCDSDSSLLALIRDELLPQYEHILMEPDPVPAYALKLLVAMTEHNPAFTRLVEESKLVPLIFEVILEHQESILGNTMQSVIALLNNLVAYKDSNMQLLYEQGLVGHVCNMFTETATLCLDRDNKTNTEPASTLLASLLDILLGMLTYTSRIVRQALQVQKSGSRGDTQAAEDLLLLSKPLTDLISLLIPLLPSEDPEISEVSSKCLSILVQLYGGENPESLSPENMVTFANLLMTKEDPKDQKLLLRILKRMVTSNERLLESLKNTGSLLQALERLAPAHRLRGPWAGISCALFQQRAAAQGIPELPPYGIPCCGPSHKRVTGVKLYPC.

Residues 4-280 (FVLYEEIGRG…WEGVLQHPFW (277 aa)) enclose the Protein kinase domain. Asp121 acts as the Proton acceptor in catalysis. 2 disordered regions span residues 304 to 332 (ECSG…AHRL) and 369 to 401 (TSAM…GHLS). Residues 384–400 (SSPQKTSPLSKMTSGHL) show a composition bias toward polar residues. HEAT repeat units follow at residues 504 to 543 (RLLH…HTTE), 727 to 765 (LIQE…HNRD), 796 to 834 (NEYL…RKHP), 926 to 964 (STVM…LLVS), 1025 to 1063 (LVEE…NLVA), 1105 to 1143 (STLL…DTQA), and 1151 to 1189 (SKPL…LYGG).

This sequence belongs to the protein kinase superfamily. Ser/Thr protein kinase family. APG1/unc-51/ULK1 subfamily. Expressed in embryonic and adult brain. In the brain, widely expressed, with highest levels in layers II/III and V of the cortex, piriform cortex, CA1-3 of hippocampus, dentate gyrus, ependymal cells lining the ventricles and choroid plexus, and in the thalamic reticular nucleus (at protein level).

It carries out the reaction L-seryl-[protein] + ATP = O-phospho-L-seryl-[protein] + ADP + H(+). The enzyme catalyses L-threonyl-[protein] + ATP = O-phospho-L-threonyl-[protein] + ADP + H(+). May be involved in the remodeling of cytoskeletal components, such as alpha-tubulin, and in this way regulates neurite branching and elongation, as well as cell motility. The chain is Serine/threonine-protein kinase ULK4 (Ulk4) from Mus musculus (Mouse).